Reading from the N-terminus, the 361-residue chain is Core-capsid bridging protein (361 aa).

Positions 311-321 (RRRRVARRSKS) are enriched in basic residues. A disordered region spans residues 311 to 331 (RRRRVARRSKSTGRFVAAPRK).

The protein belongs to the adenoviridae core-capsid bridging protein family. As to quaternary structure, monomer. Homodimer. Exists in equilibrium between monomers and dimers in solution. Interacts with the histone-like nucleoprotein; this interactions bridge the virus core to the capsid. Interacts with core protein X; this interactions bridge the virus core to the capsid. Interacts with the endosome lysis protein VI; this interactions bridge the virus core to the capsid. Interacts with the peripentonal hexons. Interacts with host NPM1; this interaction might play a role in virus assembly.

The protein resides in the virion. The protein localises to the host nucleus. It localises to the host nucleolus. In terms of biological role, associates loosely with the viral DNA to form an outer shell around the nucleoprotein-DNA complex and links it with the capsid by binding the endosome lysis protein. Dissociates from the viral genome during entry. Might be involved in nuclear capsid assembly of the viral particles through its association with NPM1/nucleophosmin. The chain is Core-capsid bridging protein from Bovine adenovirus 2 (BAdV-2).